A 689-amino-acid polypeptide reads, in one-letter code: Methionine--tRNA ligase (689 aa).

Positions Pro13–His23 match the 'HIGH' region motif. Residues Cys144, Cys147, Cys157, and Cys160 each coordinate Zn(2+). Residues Lys341–Ser345 carry the 'KMSKS' region motif. Lys344 is a binding site for ATP. Positions Asp583–Arg689 constitute a tRNA-binding domain.

This sequence belongs to the class-I aminoacyl-tRNA synthetase family. MetG type 1 subfamily. Homodimer. Zn(2+) is required as a cofactor.

The protein localises to the cytoplasm. It carries out the reaction tRNA(Met) + L-methionine + ATP = L-methionyl-tRNA(Met) + AMP + diphosphate. Its function is as follows. Is required not only for elongation of protein synthesis but also for the initiation of all mRNA translation through initiator tRNA(fMet) aminoacylation. The chain is Methionine--tRNA ligase from Polaromonas sp. (strain JS666 / ATCC BAA-500).